The primary structure comprises 211 residues: Ubiquitin-conjugating enzyme E2 S (211 aa).

The region spanning 11–157 (HVIRQVYKEV…ARLMTEIHAH (147 aa)) is the UBC core domain. The active-site Glycyl thioester intermediate is cysteine 95. Residues 157–167 (HSSSLRGKDPT) are compositionally biased toward basic and acidic residues. The tract at residues 157–211 (HSSSLRGKDPTDPCSSASVTGALGDGPMAKKHAGDRDKKLAAKKKTDKKRALRRL) is disordered. The segment covering 197–211 (AAKKKTDKKRALRRL) has biased composition (basic residues).

It belongs to the ubiquitin-conjugating enzyme family.

It carries out the reaction S-ubiquitinyl-[E1 ubiquitin-activating enzyme]-L-cysteine + [E2 ubiquitin-conjugating enzyme]-L-cysteine = [E1 ubiquitin-activating enzyme]-L-cysteine + S-ubiquitinyl-[E2 ubiquitin-conjugating enzyme]-L-cysteine.. It participates in protein modification; protein ubiquitination. Catalyzes the covalent attachment of ubiquitin to other proteins. Acts as an essential factor of the anaphase promoting complex/cyclosome (APC/C), a cell cycle-regulated ubiquitin ligase that controls progression through mitosis. Acts by specifically elongating 'Lys-11'-linked polyubiquitin chains initiated by the E2 enzyme ube2c/ubch10 on APC/C substrates, enhancing the degradation of APC/C substrates by the proteasome and promoting mitotic exit. This chain is Ubiquitin-conjugating enzyme E2 S (ube2s), found in Aquarana catesbeiana (American bullfrog).